A 105-amino-acid chain; its full sequence is MGETEGKKDEADYKRLQTFPLVRHSDMPEEMRVETMELCVTACEKFSNNNESAAKMIKETMDKKFGSSWHVVIGEGFGFEITHEVKNLLYLYFGGTLAVCVWKCS.

This sequence belongs to the dynein light chain family. In terms of assembly, consists of at least two heavy chains and a number of intermediate and light chains.

The protein resides in the cytoplasm. It localises to the cytoskeleton. The protein localises to the cilium axoneme. Force generating protein of respiratory cilia. Produces force towards the minus ends of microtubules. Dynein has ATPase activity. The chain is Dynein axonemal light chain 4 (DNAL4) from Bos taurus (Bovine).